A 299-amino-acid polypeptide reads, in one-letter code: MRIIVLGSAAGGGHPQWNCHTPASLRAWQQADGAQRRTQASIAVSADGERWVLINASPDFRQQILATPALWPQQGLRHSPIKAVLLTSGEIDHIAGLLSMRESQPFALHASRRVLDLLAQNPIFDAVNPQYVSRQPFTLNAPLTVSGLQLTPFSVPGKVPLFMESRSGGDLAGSQEETLGLTIDDSQHRVHYIPGCAAMTDALRARLHGAELVFFDGTLWRDDEMVQLGISQKTGQRMGHMSIDGPEGTIAAFAPLNVARKIFIHLNTTNPVLNTQSPEFATARASGWEVAHDGLEIAL.

This sequence belongs to the PqqB family.

Its pathway is cofactor biosynthesis; pyrroloquinoline quinone biosynthesis. May be involved in the transport of PQQ or its precursor to the periplasm. This chain is Coenzyme PQQ synthesis protein B, found in Xanthomonas oryzae pv. oryzae (strain MAFF 311018).